A 119-amino-acid polypeptide reads, in one-letter code: Large ribosomal subunit protein uL14 (119 aa).

This sequence belongs to the universal ribosomal protein uL14 family. In terms of assembly, part of the 50S ribosomal subunit. Forms a cluster with proteins L3 and L19. In the 70S ribosome, L14 and L19 interact and together make contacts with the 16S rRNA in bridges B5 and B8.

Binds to 23S rRNA. Forms part of two intersubunit bridges in the 70S ribosome. This Wolbachia sp. subsp. Brugia malayi (strain TRS) protein is Large ribosomal subunit protein uL14.